The sequence spans 361 residues: Chorismate synthase (361 aa).

Residues Arg-48 and Arg-54 each coordinate NADP(+). FMN-binding positions include 125 to 127, 238 to 239, Gly-278, 293 to 297, and Arg-319; these read RSS, NA, and KPTSS.

This sequence belongs to the chorismate synthase family. Homotetramer. FMNH2 serves as cofactor.

It catalyses the reaction 5-O-(1-carboxyvinyl)-3-phosphoshikimate = chorismate + phosphate. The protein operates within metabolic intermediate biosynthesis; chorismate biosynthesis; chorismate from D-erythrose 4-phosphate and phosphoenolpyruvate: step 7/7. Functionally, catalyzes the anti-1,4-elimination of the C-3 phosphate and the C-6 proR hydrogen from 5-enolpyruvylshikimate-3-phosphate (EPSP) to yield chorismate, which is the branch point compound that serves as the starting substrate for the three terminal pathways of aromatic amino acid biosynthesis. This reaction introduces a second double bond into the aromatic ring system. The sequence is that of Chorismate synthase from Vibrio cholerae serotype O1 (strain ATCC 39541 / Classical Ogawa 395 / O395).